The chain runs to 193 residues: ATP-dependent protease subunit HslV (193 aa).

The active site involves Thr-12. Residues Ala-167, Cys-170, and Thr-173 each contribute to the Na(+) site.

The protein belongs to the peptidase T1B family. HslV subfamily. In terms of assembly, a double ring-shaped homohexamer of HslV is capped on each side by a ring-shaped HslU homohexamer. The assembly of the HslU/HslV complex is dependent on binding of ATP.

Its subcellular location is the cytoplasm. The catalysed reaction is ATP-dependent cleavage of peptide bonds with broad specificity.. Its activity is regulated as follows. Allosterically activated by HslU binding. Functionally, protease subunit of a proteasome-like degradation complex believed to be a general protein degrading machinery. The polypeptide is ATP-dependent protease subunit HslV (Bartonella henselae (strain ATCC 49882 / DSM 28221 / CCUG 30454 / Houston 1) (Rochalimaea henselae)).